A 204-amino-acid polypeptide reads, in one-letter code: Ribonuclease HII (204 aa).

The 197-residue stretch at 1-197 (MILGIDEAGR…KNCILNPKLL (197 aa)) folds into the RNase H type-2 domain. A divalent metal cation contacts are provided by aspartate 6, glutamate 7, and aspartate 103.

Belongs to the RNase HII family. Mn(2+) is required as a cofactor. It depends on Mg(2+) as a cofactor.

It is found in the cytoplasm. It carries out the reaction Endonucleolytic cleavage to 5'-phosphomonoester.. In terms of biological role, endonuclease that specifically degrades the RNA of RNA-DNA hybrids. The chain is Ribonuclease HII from Helicobacter pylori (strain P12).